Consider the following 256-residue polypeptide: MPITANTLYRDSFNFFKNQLLSTLTLAVLAALVTTLLGHLFIPDSEQMKLLTEAEFTFATSGKAGIQELVSQMTPEQQSMIMRAGIGTIFSSMIGSVLLVGGVLTLVAAVSAGNRISSLQAIGLSASQLPKLFLLLLICTLLIQFGLMLMLVPGIILSIALALSPVIMTAERRGVFASMKISWKLAFANIRLLVPAILLWLTARLLLVFIIDRLTFIHSEMAGIILGVFNNLISAILLIYLYRLYMLIASPQQKSI.

A run of 5 helical transmembrane segments spans residues 23-43 (TLTLAVLAALVTTLLGHLFIP), 89-109 (IFSSMIGSVLLVGGVLTLVAA), 132-152 (LFLLLLICTLLIQFGLMLMLV), 192-212 (LLVPAILLWLTARLLLVFIID), and 221-241 (MAGIILGVFNNLISAILLIYL).

The protein belongs to the UPF0259 family.

It is found in the cell inner membrane. The protein is UPF0259 membrane protein plu2479 of Photorhabdus laumondii subsp. laumondii (strain DSM 15139 / CIP 105565 / TT01) (Photorhabdus luminescens subsp. laumondii).